Reading from the N-terminus, the 197-residue chain is MVALLAEHTDTRQQAGLLVRPDNSDALSVAVTATPIVTTTGTPATPPALELDVQHGDGVSKRNGLPSRKQIEKWVKSALYADAALTVRFVDETEGRTLNRSYRGKDYATNVLTFAYAENDDDPVAGDIVLCCPVVESEAKAQKKSLEAHYAHLIVHGVLHAQGYEHDDDTEAEEMEAIETETLQALGFEDPYKPIRE.

3 residues coordinate Zn(2+): H156, H160, and H166.

Belongs to the endoribonuclease YbeY family. Zn(2+) serves as cofactor.

The protein localises to the cytoplasm. Its function is as follows. Single strand-specific metallo-endoribonuclease involved in late-stage 70S ribosome quality control and in maturation of the 3' terminus of the 16S rRNA. The chain is Endoribonuclease YbeY from Cupriavidus metallidurans (strain ATCC 43123 / DSM 2839 / NBRC 102507 / CH34) (Ralstonia metallidurans).